Here is a 253-residue protein sequence, read N- to C-terminus: Triosephosphate isomerase (253 aa).

8–10 (NWK) provides a ligand contact to substrate. Catalysis depends on His93, which acts as the Electrophile. Glu165 functions as the Proton acceptor in the catalytic mechanism. Substrate is bound by residues Gly171, Ser210, and 231–232 (GG).

The protein belongs to the triosephosphate isomerase family. As to quaternary structure, homodimer.

Its subcellular location is the cytoplasm. The catalysed reaction is D-glyceraldehyde 3-phosphate = dihydroxyacetone phosphate. Its pathway is carbohydrate biosynthesis; gluconeogenesis. The protein operates within carbohydrate degradation; glycolysis; D-glyceraldehyde 3-phosphate from glycerone phosphate: step 1/1. In terms of biological role, involved in the gluconeogenesis. Catalyzes stereospecifically the conversion of dihydroxyacetone phosphate (DHAP) to D-glyceraldehyde-3-phosphate (G3P). The polypeptide is Triosephosphate isomerase (Francisella tularensis subsp. tularensis (strain FSC 198)).